Here is a 407-residue protein sequence, read N- to C-terminus: RNA-binding motif, single-stranded-interacting protein 2 (407 aa).

Methionine 1 carries the N-acetylmethionine modification. Residues 29 to 54 are disordered; that stretch reads QQMAPPSPSNSTPNSSSGSNGNDQLS. Residues 37 to 50 are compositionally biased toward low complexity; the sequence is SNSTPNSSSGSNGN. RRM domains lie at 56-129 and 135-220; these read TNLY…MAKQ and TNLY…FADG. Position 106 is a phosphoserine (serine 106). Threonine 269 is subject to Phosphothreonine. Phosphoserine is present on residues serine 280 and serine 285.

It is found in the nucleus. The polypeptide is RNA-binding motif, single-stranded-interacting protein 2 (RBMS2) (Homo sapiens (Human)).